Consider the following 623-residue polypeptide: Riboflavin biosynthesis protein PYRR, chloroplastic (623 aa).

Residues Met1–Pro45 constitute a chloroplast transit peptide. Positions Ala52–Asp181 constitute a CMP/dCMP-type deaminase domain.

This sequence in the C-terminal section; belongs to the YbiA family.

It localises to the plastid. It is found in the chloroplast. The catalysed reaction is 5-amino-6-(5-phospho-D-ribitylamino)uracil + NADP(+) = 5-amino-6-(5-phospho-D-ribosylamino)uracil + NADPH + H(+). It catalyses the reaction 2,5-diamino-6-hydroxy-4-(5-phosphoribosylamino)-pyrimidine + H2O = 2,5,6-triamino-4-hydroxypyrimidine + D-ribose 5-phosphate. It carries out the reaction 5-amino-6-(5-phospho-D-ribosylamino)uracil + H2O = 5,6-diaminouracil + D-ribose 5-phosphate. Its pathway is cofactor biosynthesis; riboflavin biosynthesis; 5-amino-6-(D-ribitylamino)uracil from GTP: step 3/4. Its function is as follows. Pyrimidine reductase involved in the riboflavin biosynthesis pathway. Also has a non-functional N-terminal deaminase domain that lacks the catalytically essential zinc-binding residues. 39% activity when NADH replaces NADPH. No evidence for a phosphatase activity conferred by the N-terminal domain. In terms of biological role, catalyzes the hydrolysis of the N-glycosidic bond in the first two intermediates of riboflavin biosynthesis, which are highly reactive metabolites, yielding relatively innocuous products. Thus, can divert a surplus of harmful intermediates into relatively harmless products and pre-empt the damage these intermediates would otherwise do. Has no activity against GTP, nucleoside monophosphates or ADP-ribose. In Zea mays (Maize), this protein is Riboflavin biosynthesis protein PYRR, chloroplastic (PYRR).